The primary structure comprises 161 residues: uncharacterized protein (161 aa).

It belongs to the sapovirus VP3 family.

This is an uncharacterized protein from Sapporo virus (strain Human/United Kingdom/Manchester/1993) (Hu/SV/Man/1993/UK).